The chain runs to 400 residues: Inositol polyphosphate 1-phosphatase (400 aa).

Position 54 (Asp-54) interacts with Li(+). Residue Glu-79 coordinates Mg(2+). Glu-80 lines the Li(+) pocket. Mg(2+)-binding residues include Asp-153 and Ile-155. Positions 156, 157, and 158 each coordinate 1D-myo-inositol 1,4-bisphosphate. Over residues 238–257 (STRSNSEAQSQGTQNPSSEG) the composition is skewed to polar residues. The segment at 238 to 258 (STRSNSEAQSQGTQNPSSEGS) is disordered. 1D-myo-inositol 1,4-bisphosphate is bound by residues Ser-268, Lys-270, Gly-290, Ala-291, Lys-294, and Thr-312. Mg(2+) is bound at residue Asp-317. Phosphoserine is present on Ser-318.

Belongs to the inositol monophosphatase superfamily. As to quaternary structure, monomer. Requires Mg(2+) as cofactor.

It catalyses the reaction 1D-myo-inositol 1,4-bisphosphate + H2O = 1D-myo-inositol 4-phosphate + phosphate. The catalysed reaction is 1D-myo-inositol 1,3,4-trisphosphate + H2O = 1D-myo-inositol 3,4-bisphosphate + phosphate. Its pathway is signal transduction; phosphatidylinositol signaling pathway. With respect to regulation, inhibited by Li(+). Functionally, mg(2+)-dependent phosphatase that catalyzes the hydrolysis of the 1-position phosphate from inositol 1,4-bisphosphate and inositol 1,3,4-trisphosphate and participates in inositol phosphate metabolism. This chain is Inositol polyphosphate 1-phosphatase, found in Bos taurus (Bovine).